We begin with the raw amino-acid sequence, 639 residues long: Chaperone protein DnaK (639 aa).

The residue at position 198 (T198) is a Phosphothreonine; by autocatalysis. Residues 603–618 (AKAQTQGGAQEGAAKQ) show a composition bias toward low complexity. Residues 603–639 (AKAQTQGGAQEGAAKQSNATADDVVDAEFEEVKDDKK) form a disordered region. Residues 625–639 (DVVDAEFEEVKDDKK) are compositionally biased toward acidic residues.

It belongs to the heat shock protein 70 family.

Its function is as follows. Acts as a chaperone. The polypeptide is Chaperone protein DnaK (Shewanella sp. (strain MR-4)).